Here is a 561-residue protein sequence, read N- to C-terminus: MTIDFVTLLHQSDSLLLFVVLAFGLLLGKVRLGNFQIGNTIGVLFTALLFGQMGFEFTATTENVGFMLFIFCVGIEAGPHFFSVFLRDGIHYITLTLVILLTALLLTVGLAKFFNLGPGMAAGILAGSLTSTPALVGAQDALRSGLLNLPHKTDMQSVLDNMGIGYALTYLVGLVGLMLVVRYLPSLARLDLSTEAQKIARERGLSDNESRKTYLPIIRAYRVGPELAAWIGGRTLRETGIYPHTGCYVERIRRNGILASPDGDAVIQEGDEIALVGYPESHEKLDVNYRNGKEVFDRNLLDLQIVTEEIVVKNDGVVGRHLVELNLTEKGCFLNRVVRSQIEMPFDRNIMLQKGDVLQISGEKQRVKLLANKIGFISIHSQTTDLVAFTTFFVLGLLIGSVSLVFGQLEFGLGNAVGLLLAGILMGYLRANHPTVGYVPPGALRLAKDLGLAVFMVSTGLKAGGGILDHLSQVGAVVLFSGMLVTTLPVLVGYLFGVWVLKMNPALLLGAITGARTCAPAMDVVNEAANSSIPALGYAGTYAVANVMLTLAGSFIIGFWF.

A run of 5 helical transmembrane segments spans residues 8 to 28 (LLHQ…LLLG), 37 to 57 (IGNT…GFEF), 66 to 86 (FMLF…SVFL), 90 to 110 (IHYI…TVGL), and 161 to 181 (NMGI…MLVV). RCK C-terminal domains follow at residues 206 to 291 (SDNE…NYRN) and 293 to 376 (KEVF…KIGF). The next 5 helical transmembrane spans lie at 386–406 (LVAF…SLVF), 409–429 (LEFG…MGYL), 450–470 (LGLA…ILDH), 476–496 (AVVL…GYLF), and 541–561 (TYAV…GFWF).

It belongs to the AAE transporter (TC 2.A.81) family. YbjL subfamily.

It localises to the cell membrane. The protein is Putative transport protein ASA_2308 of Aeromonas salmonicida (strain A449).